We begin with the raw amino-acid sequence, 72 residues long: DNA-directed RNA polymerase subunit omega (72 aa).

The protein belongs to the RNA polymerase subunit omega family. The RNAP catalytic core consists of 2 alpha, 1 beta, 1 beta' and 1 omega subunit. When a sigma factor is associated with the core the holoenzyme is formed, which can initiate transcription.

It carries out the reaction RNA(n) + a ribonucleoside 5'-triphosphate = RNA(n+1) + diphosphate. Functionally, promotes RNA polymerase assembly. Latches the N- and C-terminal regions of the beta' subunit thereby facilitating its interaction with the beta and alpha subunits. The chain is DNA-directed RNA polymerase subunit omega from Lactobacillus johnsonii (strain CNCM I-12250 / La1 / NCC 533).